A 228-amino-acid chain; its full sequence is Ribonuclease 3 (228 aa).

An RNase III domain is found at 3–132; it reads IRPLEEHLGI…FLGALYLDQG (130 aa). Glu-45 provides a ligand contact to Mg(2+). Residue Asp-49 is part of the active site. Mg(2+)-binding residues include Asp-118 and Glu-121. Glu-121 is a catalytic residue. The DRBM domain maps to 158–227; it reads DYKSQLQEFV…AKNALDSINN (70 aa). The tract at residues 205-228 is disordered; that stretch reads GTGRTKKEAEQRAAKNALDSINNS.

This sequence belongs to the ribonuclease III family. In terms of assembly, homodimer. It depends on Mg(2+) as a cofactor.

The protein resides in the cytoplasm. The enzyme catalyses Endonucleolytic cleavage to 5'-phosphomonoester.. Digests double-stranded RNA. Involved in the processing of primary rRNA transcript to yield the immediate precursors to the large and small rRNAs (23S and 16S). Processes some mRNAs, and tRNAs when they are encoded in the rRNA operon. Processes pre-crRNA and tracrRNA of type II CRISPR loci if present in the organism. The polypeptide is Ribonuclease 3 (Oceanobacillus iheyensis (strain DSM 14371 / CIP 107618 / JCM 11309 / KCTC 3954 / HTE831)).